A 624-amino-acid polypeptide reads, in one-letter code: Phosphoenolpyruvate carboxykinase (ATP) 1 (624 aa).

The interval 1 to 22 (MASPNGGVTTYDYDDSDSAAPV) is disordered. 322–329 (GLSGTGKT) provides a ligand contact to ATP.

The protein belongs to the phosphoenolpyruvate carboxykinase (ATP) family. As to quaternary structure, homohexamer. In terms of tissue distribution, green leaves but not in roots or etiolated shoots.

It localises to the cytoplasm. The enzyme catalyses oxaloacetate + ATP = phosphoenolpyruvate + ADP + CO2. It functions in the pathway carbohydrate biosynthesis; gluconeogenesis. The polypeptide is Phosphoenolpyruvate carboxykinase (ATP) 1 (PCK1) (Urochloa panicoides (Panic liverseed grass)).